The sequence spans 299 residues: Oxygen-dependent coproporphyrinogen-III oxidase (299 aa).

S92 contacts substrate. 2 residues coordinate a divalent metal cation: H96 and H106. The active-site Proton donor is the H106. 108-110 (NVR) serves as a coordination point for substrate. The a divalent metal cation site is built by H145 and H175. Residues 240–275 (YVEFNLVWDRGTLFGLQTGGRTESILMSMPPLVRWE) form an important for dimerization region. 258-260 (GGR) contacts substrate.

It belongs to the aerobic coproporphyrinogen-III oxidase family. As to quaternary structure, homodimer. Requires a divalent metal cation as cofactor.

It localises to the cytoplasm. The enzyme catalyses coproporphyrinogen III + O2 + 2 H(+) = protoporphyrinogen IX + 2 CO2 + 2 H2O. Its pathway is porphyrin-containing compound metabolism; protoporphyrin-IX biosynthesis; protoporphyrinogen-IX from coproporphyrinogen-III (O2 route): step 1/1. In terms of biological role, involved in the heme biosynthesis. Catalyzes the aerobic oxidative decarboxylation of propionate groups of rings A and B of coproporphyrinogen-III to yield the vinyl groups in protoporphyrinogen-IX. This chain is Oxygen-dependent coproporphyrinogen-III oxidase, found in Salmonella arizonae (strain ATCC BAA-731 / CDC346-86 / RSK2980).